The chain runs to 576 residues: Probable vesicular glutamate transporter eat-4 (576 aa).

Topologically, residues 1–69 (MSSWNEAWDR…QTWIGKCRKR (69 aa)) are cytoplasmic. Residues 25–46 (AAASATGAAPPQQMQEEGNENP) are disordered. Residues 36–46 (QQMQEEGNENP) are compositionally biased toward polar residues. Residues 70–90 (WLLAILANMGFMISFGIRCNF) form a helical membrane-spanning segment. Over 91–121 (GAAKTHMYKNYTDPYGKVHMHEFNWTIDELS) the chain is Extracellular. N-linked (GlcNAc...) asparagine glycans are attached at residues N100 and N114. Residues 122–142 (VMESSYFYGYLVTQIPAGFLA) traverse the membrane as a helical segment. The Cytoplasmic portion of the chain corresponds to 143–150 (AKFPPNKL). Residues 151-171 (FGFGIGVGAFLNILLPYGFKV) traverse the membrane as a helical segment. Over 172–174 (KSD) the chain is Extracellular. Residues 175-195 (YLVAFIQITQGLVQGVCYPAM) form a helical membrane-spanning segment. Residues 196-213 (HGVWRYWAPPMERSKLAT) lie on the Cytoplasmic side of the membrane. A helical transmembrane segment spans residues 214-234 (TAFTGSYAGAVLGLPLSAFLV). Residues 235 to 239 (SYVSW) lie on the Extracellular side of the membrane. A helical transmembrane segment spans residues 240–260 (AAPFYLYGVCGVIWAILWFCV). The Cytoplasmic portion of the chain corresponds to 261–305 (TFEKPAFHPTISQEEKIFIEDAIGHVSNTHPTIRSIPWKAIVTSK). Residues 306–325 (PVWAIIVANFARSWTFYLLL) form a helical membrane-spanning segment. Residues 326–344 (QNQLTYMKEALGMKIADSG) lie on the Extracellular side of the membrane. The chain crosses the membrane as a helical span at residues 345–365 (LLAAIPHLVMGCVVLMGGQLA). Residues 366–381 (DYLRSNKILSTTAVRK) are Cytoplasmic-facing. A helical membrane pass occupies residues 382-402 (IFNCGGFGGEAAFMLIVAYTT). Topologically, residues 403-406 (SDTT) are extracellular. Residues 407–427 (AIMALIAAVGMSGFAISGFNV) traverse the membrane as a helical segment. The Cytoplasmic segment spans residues 428 to 437 (NHLDIAPRYA). A helical transmembrane segment spans residues 438-458 (AILMGFSNGIGTLAGLTCPFV). At 459–471 (TEAFTAHSKHGWT) the chain is on the extracellular side. The chain crosses the membrane as a helical span at residues 472 to 492 (SVFLLASLIHFTGVTFYAVYA). Topologically, residues 493–576 (SGELQEWAEP…VVENPHYQQW (84 aa)) are cytoplasmic.

It belongs to the major facilitator superfamily. Sodium/anion cotransporter family. VGLUT subfamily. Expressed in neurons of the pharynx and the extrapharyngeal nervous system. Highly expressed in male PHC sensory neurons.

The protein localises to the cell membrane. It is found in the synapse. Its function is as follows. Required for glutamatergic synaptic transmission. In AWB and AWC sensory neurons, required for the detection of preferred food sources, probably via glutamatergic neurotransmission from sensory neurons. Negatively regulates the turning step of male mating behavior. This is Probable vesicular glutamate transporter eat-4 from Caenorhabditis elegans.